The chain runs to 756 residues: Deoxynucleotidyltransferase terminal-interacting protein 2 (756 aa).

A disordered region spans residues 1–99 (MVVTRSARAK…AESNYSVSEH (99 aa)). Over residues 9-21 (AKASIQAASAESS) the composition is skewed to low complexity. Residue serine 21 is modified to Phosphoserine. Composition is skewed to polar residues over residues 35–55 (PESS…TGKQ) and 80–96 (EPST…NYSV). Serine 117 is modified (phosphoserine). Threonine 129 carries the phosphothreonine modification. Phosphoserine is present on residues serine 141, serine 145, serine 148, serine 184, and serine 194. Residues 156-261 (PTEKTTGARR…LSEINKPNFY (106 aa)) form a disordered region. The span at 201-211 (RRTRSMQRKLK) shows a compositional bias: basic residues. Residues lysine 217 and lysine 220 each participate in a glycyl lysine isopeptide (Lys-Gly) (interchain with G-Cter in SUMO2) cross-link. Residue threonine 232 is modified to Phosphothreonine. Residues serine 239, serine 251, and serine 253 each carry the phosphoserine modification. Residues 242–256 (RQTSHLQARSLSEIN) are compositionally biased toward polar residues. Glycyl lysine isopeptide (Lys-Gly) (interchain with G-Cter in SUMO2) cross-links involve residues lysine 257, lysine 316, and lysine 321. A phosphoserine mark is found at serine 324 and serine 330. Residue lysine 345 forms a Glycyl lysine isopeptide (Lys-Gly) (interchain with G-Cter in SUMO2) linkage. Serine 381 bears the Phosphoserine mark. Lysine 384 is covalently cross-linked (Glycyl lysine isopeptide (Lys-Gly) (interchain with G-Cter in SUMO2)). A phosphoserine mark is found at serine 434 and serine 512. Residues 505–542 (LEEEDKASEVAIEEEKEEEEDEKSEEDSSDHDENEDEF) adopt a coiled-coil conformation. The segment at 510–547 (KASEVAIEEEKEEEEDEKSEEDSSDHDENEDEFSDEED) is disordered. A tdBR region; mediates interaction with DNTT region spans residues 548–605 (FLNSTKAKLLKLTSSSIDPGLSIKQLGGLYINFNADKLQSNKRTLTQIKEKKKNELLQ). Lysine 558 participates in a covalent cross-link: Glycyl lysine isopeptide (Lys-Gly) (interchain with G-Cter in SUMO2). A Phosphoserine modification is found at serine 569. Residues lysine 584 and lysine 606 each participate in a glycyl lysine isopeptide (Lys-Gly) (interchain with G-Cter in SUMO2) cross-link. At threonine 610 the chain carries Phosphothreonine. Residues lysine 626, lysine 649, lysine 658, lysine 686, and lysine 731 each participate in a glycyl lysine isopeptide (Lys-Gly) (interchain with G-Cter in SUMO2) cross-link.

As to quaternary structure, forms a ternary complex with DNTT and core histone; interaction with PCNA releases DNTT and H2A/H2B histones from this ternary complex. Interacts with ESR1, ESR2, PPARG and RXRA. Part of the small subunit (SSU) processome, composed of more than 70 proteins and the RNA chaperone small nucleolar RNA (snoRNA) U3. Widely expressed with higher levels in testis.

Its subcellular location is the nucleus. It localises to the nucleolus. In terms of biological role, regulates the transcriptional activity of DNTT and ESR1. May function as a chromatin remodeling protein. Part of the small subunit (SSU) processome, first precursor of the small eukaryotic ribosomal subunit. During the assembly of the SSU processome in the nucleolus, many ribosome biogenesis factors, an RNA chaperone and ribosomal proteins associate with the nascent pre-rRNA and work in concert to generate RNA folding, modifications, rearrangements and cleavage as well as targeted degradation of pre-ribosomal RNA by the RNA exosome. This chain is Deoxynucleotidyltransferase terminal-interacting protein 2, found in Homo sapiens (Human).